Reading from the N-terminus, the 243-residue chain is Voltage-gated monoatomic cation channel TMEM109 (243 aa).

Positions 1-33 (MAGAHSTPLWSRHLLKAVLMVLVALFLVHSASA) are cleaved as a signal peptide. At 34-83 (QSHREFASPGQQKKETSADILTQIGRSLKEMLDTWLGPETMHVISETLLQ) the chain is on the lumenal side. A helical membrane pass occupies residues 84–104 (VMWAISSAISVACFALSGIAA). Topologically, residues 105 to 135 (QLLSALGLDGEQLTQGLKLSPSQVQTLLLWG) are cytoplasmic. The chain crosses the membrane as a helical span at residues 136–156 (AAALVIYWLLSLLLGLVLALL). At 157–185 (GRILGGLKLVLFVAGFVALVRSVPDPSTR) the chain is on the lumenal side. The helical transmembrane segment at 186 to 205 (ALMLLALLTLFALLSRLTGS) threads the bilayer. Topologically, residues 206–243 (RSSGSHLEAKVRGLERQIEELRGRQRRAAKMPRSMEEE) are cytoplasmic.

As to quaternary structure, homooligomer. Interacts with CRYAB; in the cellular response to DNA damage.

The protein resides in the nucleus outer membrane. The protein localises to the endoplasmic reticulum membrane. Its subcellular location is the sarcoplasmic reticulum membrane. It carries out the reaction K(+)(in) = K(+)(out). The catalysed reaction is Ca(2+)(in) = Ca(2+)(out). In terms of biological role, functions as a voltage-gated monoatomic cation channel permeable to both potassium and calcium. Plays a role in the cellular response to DNA damage. This is Voltage-gated monoatomic cation channel TMEM109 from Mus musculus (Mouse).